An 88-amino-acid polypeptide reads, in one-letter code: Small cysteine-rich outer membrane protein OmcA (88 aa).

Residues 1 to 18 (MKKTALLAALCSVVSLSS) form the signal peptide. Cys-19 carries the N-palmitoyl cysteine lipid modification. Cys-19 carries the S-diacylglycerol cysteine lipid modification. The tract at residues 67–88 (THQDAEHGPQAREIPVDGKCRQ) is disordered.

In terms of assembly, part of a disulfide cross-linked outer membrane complex (COMC) composed of the major outer membrane porin (MOMP), the small cysteine-rich protein (OmcA) and the large cysteine-rich periplasmic protein (OmcB).

The protein resides in the cell outer membrane. In elementary bodies (EBs, the infectious stage, which is able to survive outside the host cell) provides the structural integrity of the outer envelope through disulfide cross-links with the large cysteine-rich periplasmic protein and the major outer membrane porin. It has been described in publications as the Sarkosyl-insoluble COMC (Chlamydia outer membrane complex), and serves as the functional equivalent of peptidoglycan. The sequence is that of Small cysteine-rich outer membrane protein OmcA (omcA) from Chlamydia trachomatis serovar L2 (strain ATCC VR-902B / DSM 19102 / 434/Bu).